Consider the following 343-residue polypeptide: Biotin synthase 2 (343 aa).

Positions 58 to 285 constitute a Radical SAM core domain; that stretch reads NEVQLSTLLS…LTMVRLSAGR (228 aa). Cysteine 73, cysteine 77, and cysteine 80 together coordinate [4Fe-4S] cluster. Cysteine 117, cysteine 148, cysteine 208, and arginine 280 together coordinate [2Fe-2S] cluster.

It belongs to the radical SAM superfamily. Biotin synthase family. In terms of assembly, homodimer. It depends on [4Fe-4S] cluster as a cofactor. [2Fe-2S] cluster is required as a cofactor.

The enzyme catalyses (4R,5S)-dethiobiotin + (sulfur carrier)-SH + 2 reduced [2Fe-2S]-[ferredoxin] + 2 S-adenosyl-L-methionine = (sulfur carrier)-H + biotin + 2 5'-deoxyadenosine + 2 L-methionine + 2 oxidized [2Fe-2S]-[ferredoxin]. Its pathway is cofactor biosynthesis; biotin biosynthesis; biotin from 7,8-diaminononanoate: step 2/2. In terms of biological role, catalyzes the conversion of dethiobiotin (DTB) to biotin by the insertion of a sulfur atom into dethiobiotin via a radical-based mechanism. This chain is Biotin synthase 2, found in Polaromonas sp. (strain JS666 / ATCC BAA-500).